Consider the following 104-residue polypeptide: Small ribosomal subunit protein bS18 (104 aa).

The segment covering 1–14 has biased composition (basic and acidic residues); that stretch reads MMNNEHDNFQKEVE. The disordered stretch occupies residues 1 to 25; that stretch reads MMNNEHDNFQKEVETTTETTFNREE.

Belongs to the bacterial ribosomal protein bS18 family. As to quaternary structure, part of the 30S ribosomal subunit. Forms a tight heterodimer with protein bS6.

In terms of biological role, binds as a heterodimer with protein bS6 to the central domain of the 16S rRNA, where it helps stabilize the platform of the 30S subunit. In Mycoplasma pneumoniae (strain ATCC 29342 / M129 / Subtype 1) (Mycoplasmoides pneumoniae), this protein is Small ribosomal subunit protein bS18.